Here is a 403-residue protein sequence, read N- to C-terminus: Phosphopentomutase (403 aa).

Mn(2+)-binding residues include D13, D298, H303, D339, H340, and H351.

This sequence belongs to the phosphopentomutase family. Mn(2+) serves as cofactor.

The protein localises to the cytoplasm. It carries out the reaction 2-deoxy-alpha-D-ribose 1-phosphate = 2-deoxy-D-ribose 5-phosphate. It catalyses the reaction alpha-D-ribose 1-phosphate = D-ribose 5-phosphate. Its pathway is carbohydrate degradation; 2-deoxy-D-ribose 1-phosphate degradation; D-glyceraldehyde 3-phosphate and acetaldehyde from 2-deoxy-alpha-D-ribose 1-phosphate: step 1/2. Isomerase that catalyzes the conversion of deoxy-ribose 1-phosphate (dRib-1-P) and ribose 1-phosphate (Rib-1-P) to deoxy-ribose 5-phosphate (dRib-5-P) and ribose 5-phosphate (Rib-5-P), respectively. This is Phosphopentomutase from Streptococcus equi subsp. zooepidemicus (strain MGCS10565).